Reading from the N-terminus, the 545-residue chain is Protein FAR1-RELATED SEQUENCE 9 (545 aa).

The region spanning 22-65 (LNYLKRRQLENPGFLYAIEDDCGNVFWADPTCRLNYTYFGDTLV) is the FAR1 domain. The 85-residue stretch at 66–150 (FDTTYRRGKR…RVFSQTRLRF (85 aa)) folds into the MULE domain. The SWIM-type zinc-finger motif lies at 345 to 381 (HTVSFDSLEVKANCSCQMFEYSGIICRHILAVFSAKN). The disordered stretch occupies residues 460-495 (SNRTPGTRLPNGEAYPSEEARETANATNHPGGEKER). The stretch at 492-545 (EKERTILELTAELERTGQRCEVYRANLLSILRDMEEQKFQLSLKVQNARLSLKE) forms a coiled coil.

It belongs to the FHY3/FAR1 family. Expressed in hypocotyls, rosette and cauline leaves, inflorescences stems, flowers and siliques.

The protein localises to the nucleus. Functionally, putative transcription activator involved in regulating light control of development. May act as a negative regulator specific to phyB signaling. The polypeptide is Protein FAR1-RELATED SEQUENCE 9 (FRS9) (Arabidopsis thaliana (Mouse-ear cress)).